The following is a 471-amino-acid chain: Variant surface glycoprotein ILTAT 1.21 (471 aa).

Residues 1 to 21 (MLRALLPSTTLALILAGGGHA) form the signal peptide. 2 N-linked (GlcNAc...) asparagine glycosylation sites follow: asparagine 64 and asparagine 405. The interval 406–449 (ATADECPETRCEYDSEKNECRPKKGTETTATGPGERTTPADGKA) is disordered. Over residues 412–431 (PETRCEYDSEKNECRPKKGT) the composition is skewed to basic and acidic residues. A glycan (N-linked (GlcNAc...) asparagine) is linked at asparagine 450. Residue serine 454 is the site of GPI-anchor amidated serine attachment. A propeptide spans 455–471 (DSLLIKTSPLWLAFLLF) (removed in mature form).

The protein localises to the cell membrane. Its function is as follows. VSG forms a coat on the surface of the parasite. The trypanosome evades the immune response of the host by expressing a series of antigenically distinct VSGs from an estimated 1000 VSG genes. This chain is Variant surface glycoprotein ILTAT 1.21, found in Trypanosoma brucei brucei.